We begin with the raw amino-acid sequence, 298 residues long: Acetylglutamate kinase (298 aa).

Substrate is bound by residues 69 to 70 (GG), Arg-91, and Asn-191.

It belongs to the acetylglutamate kinase family. ArgB subfamily.

It localises to the cytoplasm. The enzyme catalyses N-acetyl-L-glutamate + ATP = N-acetyl-L-glutamyl 5-phosphate + ADP. It participates in amino-acid biosynthesis; L-arginine biosynthesis; N(2)-acetyl-L-ornithine from L-glutamate: step 2/4. In terms of biological role, catalyzes the ATP-dependent phosphorylation of N-acetyl-L-glutamate. The chain is Acetylglutamate kinase from Neisseria gonorrhoeae (strain ATCC 700825 / FA 1090).